Consider the following 83-residue polypeptide: Retinal cone rhodopsin-sensitive cGMP 3',5'-cyclic phosphodiesterase subunit gamma (83 aa).

The segment covering Met-1–Thr-17 has biased composition (polar residues). The disordered stretch occupies residues Met-1–Pro-51. Residues Gly-22 to Val-43 show a composition bias toward basic residues.

The protein belongs to the rod/cone cGMP-PDE gamma subunit family. As to quaternary structure, tetramer composed of two catalytic chains (alpha and beta), and two inhibitory chains (gamma).

It carries out the reaction 3',5'-cyclic GMP + H2O = GMP + H(+). Functionally, participates in processes of transmission and amplification of the visual signal. cGMP-PDEs are the effector molecules in G-protein-mediated phototransduction in vertebrate rods and cones. The polypeptide is Retinal cone rhodopsin-sensitive cGMP 3',5'-cyclic phosphodiesterase subunit gamma (PDE6H) (Bos taurus (Bovine)).